Here is an 86-residue protein sequence, read N- to C-terminus: Small ribosomal subunit protein bS20 (86 aa).

Residues 1-27 (MANSKSAKKRATQAERRRQHNASRRSM) show a composition bias toward basic residues. The segment at 1 to 28 (MANSKSAKKRATQAERRRQHNASRRSMM) is disordered.

This sequence belongs to the bacterial ribosomal protein bS20 family.

In terms of biological role, binds directly to 16S ribosomal RNA. This chain is Small ribosomal subunit protein bS20, found in Aliivibrio salmonicida (strain LFI1238) (Vibrio salmonicida (strain LFI1238)).